The chain runs to 474 residues: Trifunctional enzyme subunit beta, mitochondrial (474 aa).

A mitochondrion-targeting transit peptide spans 1-33 (MTILTYPFKNLPTASKWALRFSIRPLSCSSQLR). K72 bears the N6-acetyllysine; alternate mark. K72 bears the N6-succinyllysine; alternate mark. Catalysis depends on C138, which acts as the Acyl-thioester intermediate. An intramembrane segment occupies 173–220 (IRHSRKMRKLMLDLNKAKSMGQRLSLISKFRFNFLAPELPAVSEFSTS). Residue K188 is modified to N6-acetyllysine; alternate. K188 carries the N6-succinyllysine; alternate modification. Residues K190, K272, and K291 each carry the N6-succinyllysine modification. An N6-acetyllysine; alternate modification is found at K293. K293 carries the N6-succinyllysine; alternate modification. K298 is modified (N6-acetyllysine). Residue K332 is modified to N6-acetyllysine; alternate. K332 is subject to N6-succinyllysine; alternate. An N6-acetyllysine mark is found at K348 and K361. The active-site Proton donor/acceptor is the C458.

Belongs to the thiolase-like superfamily. Thiolase family. In terms of assembly, heterotetramer of 2 alpha/HADHA and 2 beta/HADHB subunits; forms the mitochondrial trifunctional enzyme. Also purified as higher order heterooligomers including a 4 alpha/HADHA and 4 beta/HADHB heterooligomer which physiological significance remains unclear. The mitochondrial trifunctional enzyme interacts with MTLN. Interacts with RSAD2/viperin.

The protein resides in the mitochondrion. It is found in the mitochondrion inner membrane. Its subcellular location is the mitochondrion outer membrane. The protein localises to the endoplasmic reticulum. It catalyses the reaction an acyl-CoA + acetyl-CoA = a 3-oxoacyl-CoA + CoA. The catalysed reaction is butanoyl-CoA + acetyl-CoA = 3-oxohexanoyl-CoA + CoA. The enzyme catalyses hexanoyl-CoA + acetyl-CoA = 3-oxooctanoyl-CoA + CoA. It carries out the reaction octanoyl-CoA + acetyl-CoA = 3-oxodecanoyl-CoA + CoA. It catalyses the reaction decanoyl-CoA + acetyl-CoA = 3-oxododecanoyl-CoA + CoA. The catalysed reaction is dodecanoyl-CoA + acetyl-CoA = 3-oxotetradecanoyl-CoA + CoA. The enzyme catalyses tetradecanoyl-CoA + acetyl-CoA = 3-oxohexadecanoyl-CoA + CoA. The protein operates within lipid metabolism; fatty acid beta-oxidation. In terms of biological role, mitochondrial trifunctional enzyme catalyzes the last three of the four reactions of the mitochondrial beta-oxidation pathway. The mitochondrial beta-oxidation pathway is the major energy-producing process in tissues and is performed through four consecutive reactions breaking down fatty acids into acetyl-CoA. Among the enzymes involved in this pathway, the trifunctional enzyme exhibits specificity for long-chain fatty acids. Mitochondrial trifunctional enzyme is a heterotetrameric complex composed of two proteins, the trifunctional enzyme subunit alpha/HADHA carries the 2,3-enoyl-CoA hydratase and the 3-hydroxyacyl-CoA dehydrogenase activities, while the trifunctional enzyme subunit beta/HADHB described here bears the 3-ketoacyl-CoA thiolase activity. The polypeptide is Trifunctional enzyme subunit beta, mitochondrial (HADHB) (Homo sapiens (Human)).